Here is a 622-residue protein sequence, read N- to C-terminus: Glutamyl-tRNA(Gln) amidotransferase subunit E (622 aa).

This sequence belongs to the GatB/GatE family. GatE subfamily. In terms of assembly, heterodimer of GatD and GatE.

It carries out the reaction L-glutamyl-tRNA(Gln) + L-glutamine + ATP + H2O = L-glutaminyl-tRNA(Gln) + L-glutamate + ADP + phosphate + H(+). Allows the formation of correctly charged Gln-tRNA(Gln) through the transamidation of misacylated Glu-tRNA(Gln) in organisms which lack glutaminyl-tRNA synthetase. The reaction takes place in the presence of glutamine and ATP through an activated gamma-phospho-Glu-tRNA(Gln). The GatDE system is specific for glutamate and does not act on aspartate. The polypeptide is Glutamyl-tRNA(Gln) amidotransferase subunit E (Halobacterium salinarum (strain ATCC 29341 / DSM 671 / R1)).